Reading from the N-terminus, the 1110-residue chain is Retinal guanylyl cyclase 1 (1110 aa).

Positions 1–56 (MTACTFLAGGLRDPGLCGPTRWAPSPPGLPPIPPRPRLRLRPPLLLLLLLPRSVLS) are cleaved as a signal peptide. The Extracellular segment spans residues 57–467 (AVFTVGVLGP…PDTICNGGVE (411 aa)). Asparagine 302 is a glycosylation site (N-linked (GlcNAc...) asparagine). The helical transmembrane segment at 468 to 492 (PSVVFIGFLLVVGMGLAGAFLAHYC) threads the bilayer. One can recognise a Protein kinase domain in the interval 493 to 813 (RHRLLHIQMV…DRTFELFKSI (321 aa)). The Cytoplasmic segment spans residues 493 to 1110 (RHRLLHIQMV…KARPGQFSGK (618 aa)). A Guanylate cyclase domain is found at 885–1015 (TLYFSDIVGF…DTVNTASAME (131 aa)). The disordered stretch occupies residues 1070–1110 (PIPKPPDLQPGASNHGISLHEIPPDRRQKLEKARPGQFSGK). Over residues 1091–1103 (IPPDRRQKLEKAR) the composition is skewed to basic and acidic residues.

Belongs to the adenylyl cyclase class-4/guanylyl cyclase family. As to quaternary structure, homodimer; requires homodimerization for guanylyl cyclase activity. Interacts (via C-terminus) with RD3 (via C-terminus); promotes the exit of GUCY2D from the endoplasmic reticulum and its trafficking to the photoreceptor outer segments. Interaction with RD3 negatively regulates GUCY2D guanylate cyclase activity. As to expression, expressed in the retina in rod outer segment.

It is found in the photoreceptor outer segment membrane. It localises to the endoplasmic reticulum membrane. It carries out the reaction GTP = 3',5'-cyclic GMP + diphosphate. Its activity is regulated as follows. Activated by GUCA1A when free calcium ions concentration is low, and inhibited by GUCA1A when free calcium ions concentration is high. Negatively regulated by RD3; inhibits the basal and GUCA1A-stimulated guanylate cyclase activity. Catalyzes the synthesis of cyclic GMP (cGMP) in rods and cones of photoreceptors. Plays an essential role in phototransduction, by mediating cGMP replenishment. May also participate in the trafficking of membrane-asociated proteins to the photoreceptor outer segment membrane. The polypeptide is Retinal guanylyl cyclase 1 (GUCY2D) (Bos taurus (Bovine)).